Consider the following 394-residue polypeptide: ATP phosphoribosyltransferase regulatory subunit (394 aa).

It belongs to the class-II aminoacyl-tRNA synthetase family. HisZ subfamily. In terms of assembly, heteromultimer composed of HisG and HisZ subunits.

It localises to the cytoplasm. Its pathway is amino-acid biosynthesis; L-histidine biosynthesis; L-histidine from 5-phospho-alpha-D-ribose 1-diphosphate: step 1/9. In terms of biological role, required for the first step of histidine biosynthesis. May allow the feedback regulation of ATP phosphoribosyltransferase activity by histidine. This is ATP phosphoribosyltransferase regulatory subunit from Geobacillus kaustophilus (strain HTA426).